We begin with the raw amino-acid sequence, 478 residues long: Ribosome biogenesis protein NOP53 (478 aa).

Positions 1 to 10 (MAAGGSGVGG) are enriched in gly residues. The tract at residues 1–51 (MAAGGSGVGGKRSSKSDADSGFLGLRPTSVDPALRRRRRGPRNKKRGWRRL) is disordered. Ala-2 bears the N-acetylalanine mark. Ser-29 is modified (phosphoserine). The segment covering 35–49 (RRRRRGPRNKKRGWR) has biased composition (basic residues). Ser-93 and Ser-305 each carry phosphoserine. Residues 148 to 431 (KEQLWEKLAK…SELTDSLRTL (284 aa)) form a mediates interaction with CDKN2A/isoform tumor suppressor ARF region. The tract at residues 181–478 (KPGPQDTVER…EKRAFREIQL (298 aa)) is mediates interaction with NF2. The disordered stretch occupies residues 303–344 (EESDGEGEPGQGEGPEAGDAEVCPTPARLATTEKKTEQQRRR). Residues 333-342 (TTEKKTEQQR) are compositionally biased toward basic and acidic residues. The segment at 342–386 (RRREKAVHRLRVQQAALRAARLRHQELFRLRGIKAQVALRLAELA) is mediates interaction with human herpesvirus 8 protein ORF16. Nucleolar localization signal regions lie at residues 347-395 (AVHR…RQAR) and 396-478 (REAE…EIQL).

Belongs to the NOP53 family. In terms of assembly, homooligomer. Interacts with PTEN; regulates PTEN phosphorylation and increases its stability. Interacts with RPL11; retains RPL11 into the nucleolus. Interacts with CDKN2A/isoform tumor suppressor ARF; the interaction is direct and promotes ARF nucleoplasmic relocalization and ubiquitin-mediated proteasomal degradation. Interacts with NPM1; the interaction is direct and competitive with MYC. Interacts with NF2 (via FERM domain); the interaction is direct. Interacts with p53/TP53 (via the oligomerization region); the interaction is direct and may prevent the MDM2-mediated proteasomal degradation of p53/TP53. Interacts with RIGI; may regulate RIGI through USP15-mediated 'Lys-63'-linked deubiquitination. Interacts with UBTF. (Microbial infection) Interacts with herpes simplex virus 1 early proteins ICP22 and ICP0. As to quaternary structure, (Microbial infection) Interacts with Human herpesvirus 8 protein ORF16; may sequester ORF16 in host nucleolus and reduce its antiapoptotic activity. Post-translationally, ubiquitin-mediated proteasomal degradation is regulated by c-JUN. It is associated with relocalization to the nucleoplasm and decreased homooligomerization. In terms of processing, phosphorylated upon DNA damage probably by ATM and DNA-PK; may regulate NOP53 degradation. As to expression, expressed at high levels in heart and pancreas, moderate levels in placenta, liver, skeletal muscle, and kidney, and low levels in brain and lung.

Its subcellular location is the nucleus. It localises to the nucleolus. The protein localises to the nucleoplasm. In terms of biological role, nucleolar protein which is involved in the integration of the 5S RNP into the ribosomal large subunit during ribosome biogenesis. In ribosome biogenesis, may also play a role in rRNA transcription. Also functions as a nucleolar sensor that regulates the activation of p53/TP53 in response to ribosome biogenesis perturbation, DNA damage and other stress conditions. DNA damage or perturbation of ribosome biogenesis disrupt the interaction between NOP53 and RPL11 allowing RPL11 transport to the nucleoplasm where it can inhibit MDM2 and allow p53/TP53 activation. It may also positively regulate the function of p53/TP53 in cell cycle arrest and apoptosis through direct interaction, preventing its MDM2-dependent ubiquitin-mediated proteasomal degradation. Originally identified as a tumor suppressor, it may also play a role in cell proliferation and apoptosis by positively regulating the stability of PTEN, thereby antagonizing the PI3K-AKT/PKB signaling pathway. May also inhibit cell proliferation and increase apoptosis through its interaction with NF2. May negatively regulate NPM1 by regulating its nucleoplasmic localization, oligomerization and ubiquitin-mediated proteasomal degradation. Thereby, may prevent NPM1 interaction with MYC and negatively regulate transcription mediated by the MYC-NPM1 complex. May also regulate cellular aerobic respiration. In the cellular response to viral infection, may play a role in the attenuation of interferon-beta through the inhibition of RIGI. This Homo sapiens (Human) protein is Ribosome biogenesis protein NOP53.